Here is a 221-residue protein sequence, read N- to C-terminus: Glutathione S-transferase 1 (221 aa).

Positions 7–88 (QKMQLYSFSL…YLEEKFPENP (82 aa)) constitute a GST N-terminal domain. Glutathione is bound by residues 17 to 22 (SSCAWR), Val-60, 72 to 73 (DS), Gln-112, and 116 to 118 (NLA). The GST C-terminal domain maps to 93-221 (DLQKRALNYQ…ISPMLDEAKS (129 aa)).

Belongs to the GST superfamily. Zeta family.

It catalyses the reaction RX + glutathione = an S-substituted glutathione + a halide anion + H(+). Conjugation of reduced glutathione to a wide number of exogenous and endogenous hydrophobic electrophiles. This is Glutathione S-transferase 1 (GST1) from Dianthus caryophyllus (Carnation).